The following is a 386-amino-acid chain: ADP,ATP carrier protein, mitochondrial (386 aa).

Residues 1 to 77 (MADMNQHPTV…SNASPVFVQA (77 aa)) constitute a mitochondrion transit peptide. Solcar repeat units lie at residues 84–177 (AAFA…FKRL), 189–281 (KWFA…LKPV), and 289–375 (DSFF…LQVL). 5 consecutive transmembrane segments (helical) span residues 86 to 113 (FATD…VKLL), 154 to 178 (TANV…KRLF), 187 to 207 (YWKW…SSLF), 257 to 278 (FNIS…YDSL), and 292 to 312 (FASF…SYPI). Positions 159 and 171 each coordinate ADP. R316 is an ADP binding site. The segment at 316–321 (RRRMMM) is important for transport activity. A Nucleotide carrier signature motif motif is present at residues 316–321 (RRRMMM). Residues 352–372 (AGANILRAVAGAGVLAGYDKL) form a helical membrane-spanning segment.

It belongs to the mitochondrial carrier (TC 2.A.29) family. As to quaternary structure, monomer.

The protein resides in the mitochondrion inner membrane. It carries out the reaction ADP(in) + ATP(out) = ADP(out) + ATP(in). With respect to regulation, the matrix-open state (m-state) is inhibited by the membrane-permeable bongkrekic acid (BKA). The cytoplasmic-open state (c-state) is inhibited by the membrane-impermeable toxic inhibitor carboxyatractyloside (CATR). Its function is as follows. ADP:ATP antiporter that mediates import of ADP into the mitochondrial matrix for ATP synthesis, and export of ATP out to fuel the cell. Cycles between the cytoplasmic-open state (c-state) and the matrix-open state (m-state): operates by the alternating access mechanism with a single substrate-binding site intermittently exposed to either the cytosolic (c-state) or matrix (m-state) side of the inner mitochondrial membrane. The chain is ADP,ATP carrier protein, mitochondrial (ANT) from Solanum tuberosum (Potato).